Consider the following 131-residue polypeptide: Small ribosomal subunit protein uS11 (131 aa).

This sequence belongs to the universal ribosomal protein uS11 family. In terms of assembly, part of the 30S ribosomal subunit. Interacts with proteins S7 and S18. Binds to IF-3.

In terms of biological role, located on the platform of the 30S subunit, it bridges several disparate RNA helices of the 16S rRNA. Forms part of the Shine-Dalgarno cleft in the 70S ribosome. The chain is Small ribosomal subunit protein uS11 from Exiguobacterium sp. (strain ATCC BAA-1283 / AT1b).